The following is a 465-amino-acid chain: Ribosomal oxygenase 2 (465 aa).

The JmjC domain occupies 139–271; sequence QPQRYKDELW…NSWGDCLLDS (133 aa). Residues His-179, Asp-181, and His-240 each contribute to the Fe cation site. Phosphoserine is present on Ser-309.

Belongs to the ROX family. MINA53 subfamily. The cofactor is Fe(2+). As to expression, predominantly expressed in testis. Expressed at high levels in spleen, thymus, and colon, but barely detectable in brain, skeletal muscle, and seminal vesicle (at protein level).

The protein resides in the nucleus. It is found in the nucleolus. The enzyme catalyses L-histidyl-[ribosomal protein uL15] + 2-oxoglutarate + O2 = (3S)-3-hydroxy-L-histidyl-[ribosomal protein uL15] + succinate + CO2. It carries out the reaction L-histidyl-[protein] + 2-oxoglutarate + O2 = (3S)-3-hydroxy-L-histidyl-[protein] + succinate + CO2. Functionally, oxygenase that can act as both a histone lysine demethylase and a ribosomal histidine hydroxylase. Is involved in the demethylation of trimethylated 'Lys-9' on histone H3 (H3K9me3), leading to an increase in ribosomal RNA expression. Also catalyzes the hydroxylation of 60S ribosomal protein L27a on 'His-39'. May play an important role in cell growth and survival. May be involved in ribosome biogenesis, most likely during the assembly process of pre-ribosomal particles. The polypeptide is Ribosomal oxygenase 2 (Mus musculus (Mouse)).